We begin with the raw amino-acid sequence, 441 residues long: MSHEGEEDLLEYSDNEQDIQVDASKAAEPSELDATTAEDASNGDAEKKGSYVGIHSTGFKDFLLKPELARAIIDCGFEHPSEVQQHTIPQSIHGTDVLCQAKSGLGKTAVFVLSTLQQLDPVPGEVSVVVICNARELAYQIRNEYLRFSKYMPDVKTAVFYGGTPINKDAELLKNKETAPHIVVATPGRLKALVRDKLIDLSHVKNFVIDECDKVLEELDMRRDVQDIFRATPRDKQVMMFSATLSEEIRPICRRFLQNPLEIFVDDEAKLTLHGLQQYYTKLQENEKNRKLAQLLDDLEFNQVIIFVKSTKRANELTKLLNESNFPAITVHGHMKQAERIARYKAFKEFEKRICVSTDVFGRGIDIERINLAINYDLTTEADQYLHRVGRAGRFGTKGLAISFVSSPEDEEVLGKIQERFDVKIAEFPEEGIDPSTYLNN.

Residues 1-19 show a composition bias toward acidic residues; the sequence is MSHEGEEDLLEYSDNEQDI. The disordered stretch occupies residues 1 to 46; it reads MSHEGEEDLLEYSDNEQDIQVDASKAAEPSELDATTAEDASNGDAE. A Q motif motif is present at residues 57–85; it reads TGFKDFLLKPELARAIIDCGFEHPSEVQQ. The 176-residue stretch at 88 to 263 folds into the Helicase ATP-binding domain; the sequence is IPQSIHGTDV…RRFLQNPLEI (176 aa). 101–108 serves as a coordination point for ATP; sequence AKSGLGKT. The DECD box signature appears at 210 to 213; that stretch reads DECD. One can recognise a Helicase C-terminal domain in the interval 291–436; the sequence is KLAQLLDDLE…EFPEEGIDPS (146 aa).

The protein belongs to the DEAD box helicase family. DECD subfamily.

The protein resides in the nucleus. It catalyses the reaction ATP + H2O = ADP + phosphate + H(+). In terms of biological role, ATP-binding RNA helicase involved in transcription elongation and required for the export of mRNA out of the nucleus. SUB2 also plays a role in pre-mRNA splicing and spliceosome assembly. May be involved in rDNA and telomeric silencing, and maintenance of genome integrity. The sequence is that of ATP-dependent RNA helicase SUB2-1 (SUB2-1) from Vanderwaltozyma polyspora (strain ATCC 22028 / DSM 70294 / BCRC 21397 / CBS 2163 / NBRC 10782 / NRRL Y-8283 / UCD 57-17) (Kluyveromyces polysporus).